The following is a 1224-amino-acid chain: DNA-directed RNA polymerase subunit beta (1224 aa).

Belongs to the RNA polymerase beta chain family. The RNAP catalytic core consists of 2 alpha, 1 beta, 1 beta' and 1 omega subunit. When a sigma factor is associated with the core the holoenzyme is formed, which can initiate transcription.

The catalysed reaction is RNA(n) + a ribonucleoside 5'-triphosphate = RNA(n+1) + diphosphate. In terms of biological role, DNA-dependent RNA polymerase catalyzes the transcription of DNA into RNA using the four ribonucleoside triphosphates as substrates. In Pelotomaculum thermopropionicum (strain DSM 13744 / JCM 10971 / SI), this protein is DNA-directed RNA polymerase subunit beta.